The chain runs to 222 residues: Adenylate kinase (222 aa).

ATP is bound at residue 10-15 (GAGKGT). The NMP stretch occupies residues 30 to 59 (STGDMLRAAVKAGTPLGIEAKKVMDAGGLV). Residues threonine 31, arginine 36, 57-59 (GLV), 85-88 (GFPR), and glutamine 92 contribute to the AMP site. The tract at residues 122 to 159 (GRRVHVASGRTYHVKYNPPKNEGQDDETGDPLIQRDDD) is LID. ATP-binding positions include arginine 123 and 132 to 133 (TY). Residues 135-162 (VKYNPPKNEGQDDETGDPLIQRDDDKEE) form a disordered region. AMP-binding residues include arginine 156 and arginine 167. Glycine 207 contacts ATP.

Belongs to the adenylate kinase family. As to quaternary structure, monomer.

Its subcellular location is the cytoplasm. The enzyme catalyses AMP + ATP = 2 ADP. The protein operates within purine metabolism; AMP biosynthesis via salvage pathway; AMP from ADP: step 1/1. In terms of biological role, catalyzes the reversible transfer of the terminal phosphate group between ATP and AMP. Plays an important role in cellular energy homeostasis and in adenine nucleotide metabolism. This Ralstonia nicotianae (strain ATCC BAA-1114 / GMI1000) (Ralstonia solanacearum) protein is Adenylate kinase.